A 223-amino-acid polypeptide reads, in one-letter code: Putative NAD(P)H nitroreductase SAB2397c (223 aa).

This sequence belongs to the nitroreductase family. FMN serves as cofactor.

This Staphylococcus aureus (strain bovine RF122 / ET3-1) protein is Putative NAD(P)H nitroreductase SAB2397c.